The chain runs to 309 residues: Cytochrome c biogenesis protein CcsA (309 aa).

Helical transmembrane passes span 18-38 (LGLLVFYILLVNLPISLGAFF), 43-63 (FFIVRVLTILINFLITLQLLF), 67-87 (ISGHFPISNLYESLYFLTWGI), 102-122 (IIPSIAIPIELLTVAFACFVL), 148-168 (VMLSYAALIIGSLLSASVLFI), 216-236 (SILIGFVLLTLGLISGAVWAN), 250-267 (TWAFISWMFYAAYLHMRI), and 279-299 (LATTGFLVVLICYLGVNFLGI).

Belongs to the CcmF/CycK/Ccl1/NrfE/CcsA family. As to quaternary structure, may interact with ccs1.

It is found in the cellular thylakoid membrane. Functionally, required during biogenesis of c-type cytochromes (cytochrome c6 and cytochrome f) at the step of heme attachment. The sequence is that of Cytochrome c biogenesis protein CcsA from Prochlorococcus marinus (strain MIT 9215).